The sequence spans 141 residues: Large-conductance mechanosensitive channel (141 aa).

3 consecutive transmembrane segments (helical) span residues 8 to 28 (FALK…AAFG), 38 to 58 (IIMP…FFPL), and 80 to 100 (GNFL…FLIV).

It belongs to the MscL family. In terms of assembly, homopentamer.

Its subcellular location is the cell inner membrane. Functionally, channel that opens in response to stretch forces in the membrane lipid bilayer. May participate in the regulation of osmotic pressure changes within the cell. The protein is Large-conductance mechanosensitive channel of Beijerinckia indica subsp. indica (strain ATCC 9039 / DSM 1715 / NCIMB 8712).